A 598-amino-acid chain; its full sequence is Phospholipase B-like protein G (598 aa).

Positions 1–24 are cleaved as a signal peptide; it reads MIKSYYLFFIILIFLIFINNFILC. N-linked (GlcNAc...) asparagine glycans are attached at residues N50, N98, N173, N341, N368, N450, N480, N526, and N576.

Belongs to the phospholipase B-like family.

The protein localises to the secreted. Probable phospholipase. This Dictyostelium discoideum (Social amoeba) protein is Phospholipase B-like protein G (plbG).